The chain runs to 518 residues: Glutamate--cysteine ligase (518 aa).

Belongs to the glutamate--cysteine ligase type 1 family. Type 1 subfamily.

The catalysed reaction is L-cysteine + L-glutamate + ATP = gamma-L-glutamyl-L-cysteine + ADP + phosphate + H(+). It functions in the pathway sulfur metabolism; glutathione biosynthesis; glutathione from L-cysteine and L-glutamate: step 1/2. In Salmonella agona (strain SL483), this protein is Glutamate--cysteine ligase.